The sequence spans 216 residues: Adenylate kinase (216 aa).

Position 10–15 (G10–T15) interacts with ATP. Residues S30–I59 are NMP. Residues T31, R36, K57 to I59, G85 to R88, and Q92 each bind AMP. The tract at residues G121–D158 is LID. Residues R122 and T131 to Y132 each bind ATP. AMP contacts are provided by R155 and R166. Q196 lines the ATP pocket.

Belongs to the adenylate kinase family. In terms of assembly, monomer.

It is found in the cytoplasm. It carries out the reaction AMP + ATP = 2 ADP. The protein operates within purine metabolism; AMP biosynthesis via salvage pathway; AMP from ADP: step 1/1. In terms of biological role, catalyzes the reversible transfer of the terminal phosphate group between ATP and AMP. Plays an important role in cellular energy homeostasis and in adenine nucleotide metabolism. The chain is Adenylate kinase from Buchnera aphidicola subsp. Cinara cedri (strain Cc).